Reading from the N-terminus, the 187-residue chain is Apolipophorin-3 (187 aa).

Residues 1–17 form the signal peptide; the sequence is MAAKFIILLALFALSQA. Residues 18 to 22 constitute a propeptide that is removed on maturation; it reads SVVRR.

Belongs to the insect apolipophorin-3 family. In terms of assembly, equilibrium between a soluble monomer and a bound lipoprotein form. Apolipophorin-3 associates with lipophorin during lipid loading until each particle contains 9 or 14 molecules of apolipophorin-3. In terms of tissue distribution, hemolymph.

Its subcellular location is the secreted. Functionally, assists in the loading of diacylglycerol, generated from triacylglycerol stores in the fat body through the action of adipokinetic hormone, into lipophorin, the hemolymph lipoprotein. It increases the lipid carrying capacity of lipophorin by covering the expanding hydrophobic surface resulting from diacylglycerol uptake. It thus plays a critical role in the transport of lipids during flight in several species of insects. This Hyphantria cunea (Fall webworm moth) protein is Apolipophorin-3.